The primary structure comprises 662 residues: MSWSSALIKDISKPENLIISSEIAVVIADKFPKAQHHYLVLPLADIPSIFHLNRSHLSLLEELHLLARNVVEVKGVRWQDFNVGFHAEPSMQRLHLHVISKDFVSTSLKTKKHWNSFNTELFVPYTKLYAQLEKENSISRLPKSLKDELLAKPLICNQCEFVARNLPSLKGHLVGHLQDPKSVCQRVRLGNQFFPTAGYRTSELAYCFDFVDFYEYKKQMEVDKLAYIRDELQRKLNDKRNFLIESDRAVVMKADYPKSQYHFRVVAKEEFRDITQLTEAQLPLLDHMMDLANQIIEKQKHLESRNFLIGFKVNTFWNRLNLHVISNDFYSMAMKRISHWNSFNTELFMPFQIAYMMLSVQGSIESISEETYNNLQEKTPLRCNQCEFVTNMLLDLKAHLYQHWQRKEDERDQKKKVDKIIQMISETKLDEAEAKPKLLNEEEPIQAQPVAAIAQYPNEHLGKPLTPQQQPGKQQAQNVYDKNINGPSVNMMNQNNPNNPFRNTPHLNRQSQKPPHPRSGPRGPMAPWTGPRFPCHQQQNRFRPPGFNACRQPYPPYHSGHQQFPNASSVGGGQTGLPGQGQGPRPKWNSNKIFNQQNRQNTVQAQPQAQNQQTNQQQIQNSNKNQTPKKKPWKNRLQPVGKVQNQGGANRDPAPPSNSKPS.

One can recognise an HIT domain in the interval 4-108; the sequence is SSALIKDISK…ISKDFVSTSL (105 aa). A C2H2-type zinc finger spans residues 381 to 403; it reads LRCNQCEFVTNMLLDLKAHLYQH. Residues 482 to 662 form a disordered region; that stretch reads KNINGPSVNM…PAPPSNSKPS (181 aa). Positions 490–500 are enriched in low complexity; it reads NMMNQNNPNNP. Polar residues-rich tracts occupy residues 501–513 and 560–569; these read FRNT…QSQK and GHQQFPNASS. Gly residues predominate over residues 570 to 582; sequence VGGGQTGLPGQGQ. Over residues 588–599 the composition is skewed to polar residues; that stretch reads WNSNKIFNQQNR. Low complexity predominate over residues 600 to 626; the sequence is QNTVQAQPQAQNQQTNQQQIQNSNKNQ. Positions 653-662 are enriched in pro residues; it reads PAPPSNSKPS.

The protein resides in the nucleus. DNA-binding protein involved in single-strand DNA break repair, double-strand DNA break repair and base excision repair. Resolves abortive DNA ligation intermediates formed either at base excision sites, or when DNA ligases attempt to repair non-ligatable breaks induced by reactive oxygen species. Catalyzes the release of adenylate groups covalently linked to 5'-phosphate termini, resulting in the production of 5'-phosphate termini that can be efficiently rejoined. In Drosophila melanogaster (Fruit fly), this protein is Aprataxin-like protein.